A 325-amino-acid polypeptide reads, in one-letter code: Large ribosomal subunit protein uL4m (325 aa).

Residues 113 to 158 (ASTKTRYEVHGSHKKMSPQKGTGNARRGTRQSPLMKGGGKTFGPKP) are disordered.

The protein belongs to the universal ribosomal protein uL4 family. In terms of assembly, component of the mitochondrial large ribosomal subunit (mt-LSU). Mature N.crassa 74S mitochondrial ribosomes consist of a small (37S) and a large (54S) subunit. The 37S small subunit contains a 16S ribosomal RNA (16S mt-rRNA) and 32 different proteins. The 54S large subunit contains a 23S rRNA (23S mt-rRNA) and 42 different proteins.

Its subcellular location is the mitochondrion. In terms of biological role, component of the mitochondrial ribosome (mitoribosome), a dedicated translation machinery responsible for the synthesis of mitochondrial genome-encoded proteins, including at least some of the essential transmembrane subunits of the mitochondrial respiratory chain. The mitoribosomes are attached to the mitochondrial inner membrane and translation products are cotranslationally integrated into the membrane. The protein is Large ribosomal subunit protein uL4m (yml6) of Neurospora crassa (strain ATCC 24698 / 74-OR23-1A / CBS 708.71 / DSM 1257 / FGSC 987).